A 745-amino-acid polypeptide reads, in one-letter code: Probable endochitinase ARB_07371 (745 aa).

The signal sequence occupies residues 1–23 (MALPKTIMAFIAFISFLVSTTFA). The GH18 domain occupies 30-351 (TNVVTYWGQG…SNIKRLLLNN (322 aa)). Residue E178 is the Proton donor of the active site. Disordered stretches follow at residues 351-372 (NDPS…SMST) and 395-446 (WSMP…TTEI). The span at 357 to 372 (TTTSKTMSSTKTSMST) shows a compositional bias: low complexity. N-linked (GlcNAc...) asparagine glycans are attached at residues N438 and N484. A disordered region spans residues 651-715 (SEPMTPTQVP…EMGGNGGDRT (65 aa)). The GPI-anchor amidated glycine moiety is linked to residue G720. Positions 721–745 (GAGVVSPSFSVVVIVLGSIVYHIMQ) are cleaved as a propeptide — removed in mature form.

This sequence belongs to the glycosyl hydrolase 18 family. Chitinase class III subfamily.

The protein resides in the cell membrane. Its subcellular location is the secreted. It is found in the cell wall. The catalysed reaction is Random endo-hydrolysis of N-acetyl-beta-D-glucosaminide (1-&gt;4)-beta-linkages in chitin and chitodextrins.. Functionally, GPI-anchored chitinase involved in the degradation of chitin, a component of the cell walls of fungi and exoskeletal elements of some animals (including worms and arthropods). Required to reshape the cell wall at the sites where cell wall remodeling and/or cell wall maturation actively take place such as sites of conidia formation. This chain is Probable endochitinase ARB_07371, found in Arthroderma benhamiae (strain ATCC MYA-4681 / CBS 112371) (Trichophyton mentagrophytes).